The primary structure comprises 207 residues: Dephospho-CoA kinase (207 aa).

The region spanning 11-207 (RIGLTGGIAS…LLKMSPTAEL (197 aa)) is the DPCK domain. ATP is bound at residue 19–24 (ASGKSS).

Belongs to the CoaE family.

It localises to the cytoplasm. It catalyses the reaction 3'-dephospho-CoA + ATP = ADP + CoA + H(+). It participates in cofactor biosynthesis; coenzyme A biosynthesis; CoA from (R)-pantothenate: step 5/5. Its function is as follows. Catalyzes the phosphorylation of the 3'-hydroxyl group of dephosphocoenzyme A to form coenzyme A. The chain is Dephospho-CoA kinase from Synechococcus sp. (strain CC9605).